We begin with the raw amino-acid sequence, 239 residues long: Regulator of G-protein signaling 20 (239 aa).

Positions methionine 1 to arginine 29 are disordered. The span at proline 8–alanine 19 shows a compositional bias: low complexity. In terms of domain architecture, RGS spans serine 113–leucine 229.

In terms of assembly, forms a complex with G(alpha)z/i2 subunits and mu-opioid receptors; the formation of this complex results in mu-opioid receptor desensitization. Interacts with OPRM1. Post-translationally, fatty acylated. Heavily palmitoylated in the cysteine string motif. N- and O-glycosylated in synapsomal membranes. In terms of processing, serine phosphorylated in synapsomal membranes. Post-translationally, sumoylated with SUMO1, SUMO2 and SUMO3. Sumoylation increases binding to the G-proteins, G(alpha)-i2 and G(z), and interaction with mu-opioid receptors.

The protein localises to the membrane. It is found in the nucleus. It localises to the cytoplasm. In terms of biological role, inhibits signal transduction by increasing the GTPase activity of G protein alpha subunits thereby driving them into their inactive GDP-bound form. Binds selectively to G(z)-alpha and G(alpha)-i2 subunits, accelerates their GTPase activity and regulates their signaling activities. The G(z)-alpha activity is inhibited by the phosphorylation and palmitoylation of the G-protein. Negatively regulates mu-opioid receptor-mediated activation of the G-proteins. This Mus musculus (Mouse) protein is Regulator of G-protein signaling 20 (Rgs20).